A 160-amino-acid chain; its full sequence is Peptidyl-prolyl cis-trans isomerase CYP18-1 (160 aa).

In terms of domain architecture, PPIase cyclophilin-type spans 3–153 (VTLHTNLGDI…AEIRLNRVTI (151 aa)).

This sequence belongs to the cyclophilin-type PPIase family. As to expression, ubiquitous.

Its subcellular location is the cytoplasm. It catalyses the reaction [protein]-peptidylproline (omega=180) = [protein]-peptidylproline (omega=0). Functionally, PPIases accelerate the folding of proteins. It catalyzes the cis-trans isomerization of proline imidic peptide bonds in oligopeptides. This is Peptidyl-prolyl cis-trans isomerase CYP18-1 (CYP18-1) from Arabidopsis thaliana (Mouse-ear cress).